We begin with the raw amino-acid sequence, 645 residues long: Cytoplasmic dynein 1 intermediate chain 1 (645 aa).

Composition is skewed to basic and acidic residues over residues 1–13 (MSDK…ELER) and 20–58 (QIRE…KRRE). Disordered stretches follow at residues 1 to 58 (MSDK…KRRE) and 96 to 125 (MSPS…RTLQ). S2 bears the N-acetylserine mark. The tract at residues 2 to 123 (SDKSDLKAEL…SGDLGPLTRT (122 aa)) is interaction with DCTN1. 2 positions are modified to phosphoserine: S50 and S100. The span at 96-107 (MSPSSKSVSTPS) shows a compositional bias: low complexity. T105 is subject to Phosphothreonine. 3 positions are modified to phosphoserine: S107, S111, and S114. The tract at residues 147-163 (KLGVSKVTQVDFLPREV) is interaction with DYNLT1. The disordered stretch occupies residues 169 to 221 (ETQTPLATHQSEEDEEDEEMVESKVGQDSELENQDKKQEVKEAPPRELTEEEK). T176 carries the phosphothreonine modification. A phosphoserine mark is found at S179 and S197. Over residues 189 to 221 (VESKVGQDSELENQDKKQEVKEAPPRELTEEEK) the composition is skewed to basic and acidic residues. WD repeat units follow at residues 285-334 (SKHR…TTPE), 338-378 (HCQS…RTPV), 387-428 (AHTH…TPQE), 437-477 (SKPV…AGIG), 482-527 (GHQG…PLYS), 530-570 (DNAD…EVPT), and 576-615 (EGAS…VPHN). Position 635 is a phosphoserine (S635).

Belongs to the dynein intermediate chain family. Homodimer. The cytoplasmic dynein 1 complex consists of two catalytic heavy chains (HCs) and a number of non-catalytic subunits presented by intermediate chains (ICs), light intermediate chains (LICs) and light chains (LCs); the composition seems to vary in respect to the IC, LIC and LC composition. The heavy chain homodimer serves as a scaffold for the probable homodimeric assembly of the respective non-catalytic subunits. The ICs and LICs bind directly to the HC dimer and the LCs assemble on the IC dimer. Interacts with DYNC1H1. Interacts with DYNLT1 and DYNLT3. Interacts with DCTN1. Interacts with MCRS1; the interaction is required for the proper distribution of centriolar satellites.

The protein localises to the cytoplasm. The protein resides in the chromosome. It localises to the centromere. It is found in the kinetochore. Its subcellular location is the cytoskeleton. The protein localises to the spindle pole. In terms of biological role, acts as one of several non-catalytic accessory components of the cytoplasmic dynein 1 complex that are thought to be involved in linking dynein to cargos and to adapter proteins that regulate dynein function. Cytoplasmic dynein 1 acts as a motor for the intracellular retrograde motility of vesicles and organelles along microtubules. The intermediate chains mediate the binding of dynein to dynactin via its 150 kDa component (p150-glued) DCTN1. May play a role in mediating the interaction of cytoplasmic dynein with membranous organelles and kinetochores. In Homo sapiens (Human), this protein is Cytoplasmic dynein 1 intermediate chain 1 (DYNC1I1).